The following is a 158-amino-acid chain: Protein hunchback (158 aa).

Residues histidine 18–arginine 34 are compositionally biased toward basic residues. Disordered regions lie at residues histidine 18–alanine 96 and leucine 118–alanine 158. Polar residues predominate over residues alanine 41 to proline 50. Low complexity predominate over residues leucine 52–proline 65. Residues glutamate 139–alanine 158 show a composition bias toward basic and acidic residues.

It belongs to the hunchback C2H2-type zinc-finger protein family.

It localises to the nucleus. Its function is as follows. Gap class segmentation protein that controls development of head structures. In Drosophila mimica (Fruit fly), this protein is Protein hunchback (hb).